Reading from the N-terminus, the 229-residue chain is MSSNAPVGQLAYVLHSRAYRESSALVDFLTPQGRLRAVLRNARGKAGTLARPFVPLEVEFRGRGELKNVGRMESAGIAAWLNGEALFSGLYLNELLIRLLPAEDPHPAVFDHYAATLLALAEGRPLEPLLRAFEWRLLDDLGYGFALDSDIHGAPIAADGLYRLQVDAGLEQVFLLQPGLFNGTELLAMADADWSAPGALSAAKRLMRQALAVHLGGRPLVSRELFRKP.

This sequence belongs to the RecO family.

Functionally, involved in DNA repair and RecF pathway recombination. The polypeptide is DNA repair protein RecO (Pseudomonas fluorescens (strain ATCC BAA-477 / NRRL B-23932 / Pf-5)).